The primary structure comprises 160 residues: Cyanate hydratase (160 aa).

Active-site residues include arginine 100, glutamate 103, and serine 126.

The protein belongs to the cyanase family.

It catalyses the reaction cyanate + hydrogencarbonate + 3 H(+) = NH4(+) + 2 CO2. Catalyzes the reaction of cyanate with bicarbonate to produce ammonia and carbon dioxide. This chain is Cyanate hydratase, found in Neosartorya fischeri (strain ATCC 1020 / DSM 3700 / CBS 544.65 / FGSC A1164 / JCM 1740 / NRRL 181 / WB 181) (Aspergillus fischerianus).